The following is a 480-amino-acid chain: Protein nucleotidyltransferase YdiU (480 aa).

ATP contacts are provided by Gly86, Gly88, Arg89, Lys109, Asp121, Gly122, Arg172, and Arg179. Asp248 (proton acceptor) is an active-site residue. Residues Asn249 and Asp258 each contribute to the Mg(2+) site. An ATP-binding site is contributed by Asp258.

It belongs to the SELO family. Mg(2+) serves as cofactor. Requires Mn(2+) as cofactor.

It catalyses the reaction L-seryl-[protein] + ATP = 3-O-(5'-adenylyl)-L-seryl-[protein] + diphosphate. The enzyme catalyses L-threonyl-[protein] + ATP = 3-O-(5'-adenylyl)-L-threonyl-[protein] + diphosphate. It carries out the reaction L-tyrosyl-[protein] + ATP = O-(5'-adenylyl)-L-tyrosyl-[protein] + diphosphate. The catalysed reaction is L-histidyl-[protein] + UTP = N(tele)-(5'-uridylyl)-L-histidyl-[protein] + diphosphate. It catalyses the reaction L-seryl-[protein] + UTP = O-(5'-uridylyl)-L-seryl-[protein] + diphosphate. The enzyme catalyses L-tyrosyl-[protein] + UTP = O-(5'-uridylyl)-L-tyrosyl-[protein] + diphosphate. Its function is as follows. Nucleotidyltransferase involved in the post-translational modification of proteins. It can catalyze the addition of adenosine monophosphate (AMP) or uridine monophosphate (UMP) to a protein, resulting in modifications known as AMPylation and UMPylation. In Klebsiella pneumoniae (strain 342), this protein is Protein nucleotidyltransferase YdiU.